We begin with the raw amino-acid sequence, 86 residues long: Apolipoprotein C-I (86 aa).

Positions 1–26 (MRLFLSLPVLVVALLTILEGPGPAQG) are cleaved as a signal peptide.

It belongs to the apolipoprotein C1 family.

Its subcellular location is the secreted. Its function is as follows. Inhibitor of lipoprotein binding to the low density lipoprotein (LDL) receptor, LDL receptor-related protein, and very low density lipoprotein (VLDL) receptor. Associates with high density lipoproteins (HDL) and the triacylglycerol-rich lipoproteins in the plasma and makes up about 10% of the protein of the VLDL and 2% of that of HDL. Appears to interfere directly with fatty acid uptake and is also the major plasma inhibitor of cholesteryl ester transfer protein (CETP). Binds free fatty acids and reduces their intracellular esterification. Modulates the interaction of APOE with beta-migrating VLDL and inhibits binding of beta-VLDL to the LDL receptor-related protein. This is Apolipoprotein C-I (APOC1) from Plecturocebus moloch (Dusky titi monkey).